The sequence spans 471 residues: MGSDFSTVKIRKVTSCSICKAMMSHPVSINCGHSYCKSCIQSYYCNVSPKTGWKMLGCPLCSSPFSLENLRPNKELETIIDMIKGMEEQDQDMVCEEHEEKFNRFCEDDGQLLCWRCYWEDRHKGHTLAHVKDVYQNYKEKLQNTMTKLRELQENHEVQIHFITHQINAWKDAVEDRRQTIKSNFKNLQSFLQEEEKFYLWRLENEEKEMLVQLEGSEANLQQTFERAQCQIQELEAKCQGSAQKLLQDVKNTLSRCEAMKRNPLKADPLKVHTKCNVSELYFDVKTILRRHQVSVILDPSTAHLDLALTKGGRLVTYKRCPRDLQARSSAKRFYGLPCVLGCEGFTSGRYYFEVSVENATSWDLGVCVENVHRGFNMKKEPESGFWTIKMSEEDGLEALTSTPTPPLHLIEKPQILGVFLDYEAGAVSFYSVTTGSHIFTFPKASFQDTLRPFFQVYQYSPLFLPAINNQ.

The RING-type zinc finger occupies 16 to 62 (CSICKAMMSHPVSINCGHSYCKSCIQSYYCNVSPKTGWKMLGCPLCS). The segment at 90–131 (DQDMVCEEHEEKFNRFCEDDGQLLCWRCYWEDRHKGHTLAHV) adopts a B box-type zinc-finger fold. Zn(2+) is bound by residues C95, H98, C117, and H123. Residues 276–471 (CNVSELYFDV…PLFLPAINNQ (196 aa)) form the B30.2/SPRY domain.

Interacts (via B30.2/SPRY domain) with TAB2 and TAB3.

It is found in the cytoplasm. It catalyses the reaction S-ubiquitinyl-[E2 ubiquitin-conjugating enzyme]-L-cysteine + [acceptor protein]-L-lysine = [E2 ubiquitin-conjugating enzyme]-L-cysteine + N(6)-ubiquitinyl-[acceptor protein]-L-lysine.. It participates in protein modification; protein ubiquitination. The protein operates within protein modification; protein sumoylation. E3 ubiquitin-protein and E3 SUMO-protein ligase that acts as a regulator of innate immunity. Acts as a negative regulator of type I interferon IFN-beta production by catalyzing 'Lys-48'-linked polyubiquitination of AZI2/NAP1, leading to its degradation. Mediates 'Lys-48'-linked polyubiquitination and proteasomal degradation of the critical TLR adapter TICAM1, inhibiting TLR3-mediated type I interferon signaling. Acts as a positive regulator of the cGAS-STING pathway by acting as a E3 SUMO-protein ligase: mediates sumoylation of CGAS and STING, preventing their degradation and thereby activating the innate immune response to DNA virus. Also acts as a negative regulator of NF-kappa-B signaling independently of its E3 protein ligase activity by promoting lysosome-dependent degradation of TAB2 and TAB3 adapters. In Mus musculus (Mouse), this protein is E3 ubiquitin-protein ligase TRIM38.